A 377-amino-acid chain; its full sequence is Succinyl-diaminopimelate desuccinylase (377 aa).

Histidine 67 contacts Zn(2+). Residue aspartate 69 is part of the active site. A Zn(2+)-binding site is contributed by aspartate 100. The active-site Proton acceptor is the glutamate 134. Residues glutamate 135, glutamate 163, and histidine 349 each contribute to the Zn(2+) site.

This sequence belongs to the peptidase M20A family. DapE subfamily. In terms of assembly, homodimer. It depends on Zn(2+) as a cofactor. The cofactor is Co(2+).

It catalyses the reaction N-succinyl-(2S,6S)-2,6-diaminopimelate + H2O = (2S,6S)-2,6-diaminopimelate + succinate. Its pathway is amino-acid biosynthesis; L-lysine biosynthesis via DAP pathway; LL-2,6-diaminopimelate from (S)-tetrahydrodipicolinate (succinylase route): step 3/3. Catalyzes the hydrolysis of N-succinyl-L,L-diaminopimelic acid (SDAP), forming succinate and LL-2,6-diaminopimelate (DAP), an intermediate involved in the bacterial biosynthesis of lysine and meso-diaminopimelic acid, an essential component of bacterial cell walls. The chain is Succinyl-diaminopimelate desuccinylase from Haemophilus influenzae (strain PittEE).